A 522-amino-acid polypeptide reads, in one-letter code: Putative malate dehydrogenase 1B (522 aa).

The tract at residues 495-522 (EETEKSSSEDTPEAAAAAVSTGDETVPS) is disordered.

Belongs to the LDH/MDH superfamily. MDH type 2 family.

The sequence is that of Putative malate dehydrogenase 1B (MDH1B) from Branchiostoma floridae (Florida lancelet).